The following is a 281-amino-acid chain: Ribosomal RNA small subunit methyltransferase A (281 aa).

S-adenosyl-L-methionine is bound by residues N24, L26, G51, E72, D96, and N123.

It belongs to the class I-like SAM-binding methyltransferase superfamily. rRNA adenine N(6)-methyltransferase family. RsmA subfamily.

It localises to the cytoplasm. The catalysed reaction is adenosine(1518)/adenosine(1519) in 16S rRNA + 4 S-adenosyl-L-methionine = N(6)-dimethyladenosine(1518)/N(6)-dimethyladenosine(1519) in 16S rRNA + 4 S-adenosyl-L-homocysteine + 4 H(+). In terms of biological role, specifically dimethylates two adjacent adenosines (A1518 and A1519) in the loop of a conserved hairpin near the 3'-end of 16S rRNA in the 30S particle. May play a critical role in biogenesis of 30S subunits. The protein is Ribosomal RNA small subunit methyltransferase A of Ureaplasma urealyticum serovar 10 (strain ATCC 33699 / Western).